The following is a 467-amino-acid chain: UDP-N-acetylmuramate--L-alanine ligase (467 aa).

114–120 (GTHGKTT) is an ATP binding site.

Belongs to the MurCDEF family.

It localises to the cytoplasm. It carries out the reaction UDP-N-acetyl-alpha-D-muramate + L-alanine + ATP = UDP-N-acetyl-alpha-D-muramoyl-L-alanine + ADP + phosphate + H(+). It participates in cell wall biogenesis; peptidoglycan biosynthesis. Functionally, cell wall formation. The polypeptide is UDP-N-acetylmuramate--L-alanine ligase (Nitrobacter winogradskyi (strain ATCC 25391 / DSM 10237 / CIP 104748 / NCIMB 11846 / Nb-255)).